The primary structure comprises 492 residues: Ethanolamine-phosphate phospho-lyase (492 aa).

An N6-(pyridoxal phosphate)lysine modification is found at lysine 280. A disordered region spans residues 462-492 (ASDENGLVHPSNGNSHKHTSTIPLSKKTKRN).

This sequence belongs to the class-III pyridoxal-phosphate-dependent aminotransferase family. As to quaternary structure, homotetramer. Pyridoxal 5'-phosphate serves as cofactor.

It localises to the mitochondrion. It carries out the reaction phosphoethanolamine + H2O = acetaldehyde + NH4(+) + phosphate. Catalyzes the pyridoxal-phosphate-dependent breakdown of phosphoethanolamine, converting it to ammonia, inorganic phosphate and acetaldehyde. In Danio rerio (Zebrafish), this protein is Ethanolamine-phosphate phospho-lyase (etnppl).